We begin with the raw amino-acid sequence, 412 residues long: Na(+)/H(+) antiporter NhaA 1 (412 aa).

Helical transmembrane passes span 34–54 (VGGM…NSPA), 75–95 (LTIG…VAGL), 114–134 (LPVV…FAIG), 142–162 (AAWA…LSLT), 183–203 (LGAI…LALL), 234–254 (WIAV…LGLL), 282–302 (LIVP…EALV), 309–329 (VAIA…FGSS), 349–369 (LSAL…IAEL), and 379–399 (AKAA…VMLL).

This sequence belongs to the NhaA Na(+)/H(+) (TC 2.A.33) antiporter family.

It is found in the cell membrane. It catalyses the reaction Na(+)(in) + 2 H(+)(out) = Na(+)(out) + 2 H(+)(in). Functionally, na(+)/H(+) antiporter that extrudes sodium in exchange for external protons. The chain is Na(+)/H(+) antiporter NhaA 1 from Saccharopolyspora erythraea (strain ATCC 11635 / DSM 40517 / JCM 4748 / NBRC 13426 / NCIMB 8594 / NRRL 2338).